The sequence spans 200 residues: NAD(P)H dehydrogenase (quinone) (200 aa).

A Flavodoxin-like domain is found at 4–191 (VLVLYYSSYG…DIARYQGKHV (188 aa)). Residues 10 to 15 (SSYGHV) and 79 to 81 (TRF) contribute to the FMN site. Tyr-12 serves as a coordination point for NAD(+). A substrate-binding site is contributed by Trp-99. Residues 114 to 120 (STGTQHG) and His-135 contribute to the FMN site.

The protein belongs to the WrbA family. It depends on FMN as a cofactor.

It carries out the reaction a quinone + NADH + H(+) = a quinol + NAD(+). The enzyme catalyses a quinone + NADPH + H(+) = a quinol + NADP(+). The polypeptide is NAD(P)H dehydrogenase (quinone) (Burkholderia ambifaria (strain MC40-6)).